A 409-amino-acid chain; its full sequence is MSEEVWNGNQGILSVYVSKARDLPNLNKLDKQNVMLRLRIAHMTRASNTLHRAGQNPVFHYLEKFDITPEIKPLMYVEVYCDRRKKSPLPIGRCEIDLLNAIRADPKEGYCTWYELKRSGDEFAGTIFIELTFTPKVPRLNRDDLNKEMDRLDSSMAMRPIPPLPTESEYDYVHGSTMRQITPQCVSTSHEDKDEGQPYRNGNVFSMSSKSDTAVLANSNDPIILPPTFSASMGTTSTLETNDTAISNTSNTKFHFANLRKLKEKINIFKNPDSSTNNCQNESNKVDIEALQKAIGVTSLSYDEDDDDDDENDAFYSSSHRVSHNYNQPPLPPIPTRDDMSNYSSSRNTPLVRRDRPSRLDSSSPNSHPHPSGLNSPKLPPLPTTSNSNFNSRKNSMSPTRKRPPPRLS.

Residues 1–114 (MSEEVWNGNQ…DPKEGYCTWY (114 aa)) enclose the C2 domain. Residues 300–409 (LSYDEDDDDD…TRKRPPPRLS (110 aa)) are disordered. A compositionally biased stretch (acidic residues) spans 302–313 (YDEDDDDDDEND). Residues 315–328 (FYSSSHRVSHNYNQ) are compositionally biased toward polar residues. The span at 360–377 (LDSSSPNSHPHPSGLNSP) shows a compositional bias: low complexity. A compositionally biased stretch (polar residues) spans 384 to 399 (TTSNSNFNSRKNSMSP). A Phosphoserine modification is found at serine 392. Residues 400–409 (TRKRPPPRLS) show a composition bias toward basic residues.

The protein belongs to the INN1/fic1 family. As to quaternary structure, interacts with CYK2, CYK3 and IQG1.

Its subcellular location is the bud neck. In terms of biological role, required for the ingression of the plasma membrane into the bud neck at the end of cytokinesis, leading to the separation of the mother and daughter cells. Stimulates the synthesis of the primary septum (PS) by CHS2. This chain is Ingression protein 1 (INN1), found in Saccharomyces cerevisiae (strain ATCC 204508 / S288c) (Baker's yeast).